A 417-amino-acid chain; its full sequence is Serine hydroxymethyltransferase (417 aa).

(6S)-5,6,7,8-tetrahydrofolate-binding positions include L121 and 125-127 (GHL). K229 carries the post-translational modification N6-(pyridoxal phosphate)lysine. (6S)-5,6,7,8-tetrahydrofolate is bound at residue 355–357 (SPF).

This sequence belongs to the SHMT family. As to quaternary structure, homodimer. Pyridoxal 5'-phosphate serves as cofactor.

It is found in the cytoplasm. The enzyme catalyses (6R)-5,10-methylene-5,6,7,8-tetrahydrofolate + glycine + H2O = (6S)-5,6,7,8-tetrahydrofolate + L-serine. It participates in one-carbon metabolism; tetrahydrofolate interconversion. Its pathway is amino-acid biosynthesis; glycine biosynthesis; glycine from L-serine: step 1/1. In terms of biological role, catalyzes the reversible interconversion of serine and glycine with tetrahydrofolate (THF) serving as the one-carbon carrier. This reaction serves as the major source of one-carbon groups required for the biosynthesis of purines, thymidylate, methionine, and other important biomolecules. Also exhibits THF-independent aldolase activity toward beta-hydroxyamino acids, producing glycine and aldehydes, via a retro-aldol mechanism. The polypeptide is Serine hydroxymethyltransferase (Aeromonas salmonicida (strain A449)).